The chain runs to 122 residues: Large ribosomal subunit protein uL14 (122 aa).

It belongs to the universal ribosomal protein uL14 family. Part of the 50S ribosomal subunit. Forms a cluster with proteins L3 and L19. In the 70S ribosome, L14 and L19 interact and together make contacts with the 16S rRNA in bridges B5 and B8.

Its function is as follows. Binds to 23S rRNA. Forms part of two intersubunit bridges in the 70S ribosome. In Alteromonas mediterranea (strain DSM 17117 / CIP 110805 / LMG 28347 / Deep ecotype), this protein is Large ribosomal subunit protein uL14.